The primary structure comprises 226 residues: Ras-related protein Rab-32 (226 aa).

Position 2 is an N-acetylalanine (alanine 2). GTP contacts are provided by valine 38, glycine 39, lysine 40, threonine 41, serine 42, serine 53, glutamine 54, tyrosine 56, and threonine 59. Mg(2+) is bound at residue threonine 41. The Switch 1 signature appears at 50–64 (QLFSQHYRATIGVDF). Threonine 59 contacts Mg(2+). The residue at position 73 (serine 73) is a Phosphoserine. Mg(2+) is bound at residue aspartate 83. GTP contacts are provided by glycine 86, asparagine 145, lysine 146, aspartate 148, alanine 177, and lysine 178. A Switch 2 motif is present at residues 86-99 (GQERFGNMTRVYYK). The interval 180 to 199 (NINIDEAARFLVENILANHQ) is PKA-RII subunit binding domain. Residues 202-226 (PSEENDGRIKLDEETMKKENKSHCC) are disordered. Residues 206-226 (NDGRIKLDEETMKKENKSHCC) are compositionally biased toward basic and acidic residues. 2 S-geranylgeranyl cysteine lipidation sites follow: cysteine 225 and cysteine 226.

The protein belongs to the small GTPase superfamily. Rab family. In terms of assembly, interacts with ANKRD27. A decreased interaction with ANKRD27 seen in the presence of SGSM2. Interacts with LRRK2 (via N-terminus); this interaction results in stimulation of RAB10 phosphorylation by LRRK2. The cofactor is Mg(2+).

Its subcellular location is the mitochondrion. It is found in the mitochondrion outer membrane. It localises to the cytoplasmic vesicle. The protein resides in the phagosome. The protein localises to the phagosome membrane. Its subcellular location is the melanosome. It is found in the melanosome membrane. It carries out the reaction GTP + H2O = GDP + phosphate + H(+). Its activity is regulated as follows. Regulated by guanine the nucleotide exchange factor (GEF) BLOC-3 complex composed of HPS1 and HPS4 which promote the exchange of bound GDP for free GTP. Regulated by the GTPase activating protein (GAP) SGSM2/RUTBC1 which increases the GTP hydrolysis activity. Inhibited by GDP dissociation inhibitors (GDIs) which prevent Rab-GDP dissociation. Its function is as follows. The small GTPases Rab are key regulators of intracellular membrane trafficking, from the formation of transport vesicles to their fusion with membranes. Rabs cycle between an inactive GDP-bound form and an active GTP-bound form that is able to recruit to membranes different set of downstream effectors directly responsible for vesicle formation, movement, tethering and fusion. Also acts as an A-kinase anchoring protein by binding to the type II regulatory subunit of protein kinase A and anchoring it to the mitochondrion. Also involved in synchronization of mitochondrial fission. Plays a role in the maturation of phagosomes that engulf pathogens, such as S.aureus and M.tuberculosis. Plays an important role in the control of melanin production and melanosome biogenesis. In concert with RAB38, regulates the proper trafficking of melanogenic enzymes TYR, TYRP1 and DCT/TYRP2 to melanosomes in melanocytes. Stimulates phosphorylation of RAB10 'Thr-73' by LRRK2. The polypeptide is Ras-related protein Rab-32 (RAB32) (Sus scrofa (Pig)).